The sequence spans 117 residues: MTRIKRGYIARRRRTKIRLFASSFRGAHSRLTRTITQQRIRALVSAHRDRGRKKRDFRRLWITRINAVIRGDGVSYSYNRFIHNLYKKQLLLNRKILAQIAISNRSCLYTISNEIRK.

This sequence belongs to the bacterial ribosomal protein bL20 family.

The protein resides in the plastid. It localises to the chloroplast. Its function is as follows. Binds directly to 23S ribosomal RNA and is necessary for the in vitro assembly process of the 50S ribosomal subunit. It is not involved in the protein synthesizing functions of that subunit. In Carica papaya (Papaya), this protein is Large ribosomal subunit protein bL20c.